The chain runs to 2564 residues: Highly reducing polyketide synthase 40 (2564 aa).

The 425-residue stretch at Pro8–Arg432 folds into the Ketosynthase family 3 (KS3) domain. Catalysis depends on for beta-ketoacyl synthase activity residues Cys181, His317, and His358. A disordered region spans residues Glu435–Asp482. Low complexity predominate over residues Ser439–Asn455. Basic and acidic residues predominate over residues Gly473–Asp482. The tract at residues Tyr580 to Leu914 is malonyl-CoA:ACP transacylase (MAT) domain. Residues His973–Gly1113 form an N-terminal hotdog fold region. Positions His973–Asp1280 are dehydratase (DH) domain. The PKS/mFAS DH domain maps to His973 to Asn1283. His1005 acts as the Proton acceptor; for dehydratase activity in catalysis. The tract at residues Ala1130 to Asn1283 is C-terminal hotdog fold. The active-site Proton donor; for dehydratase activity is Asp1199. The tract at residues Leu1451–Leu1556 is methyltransferase (CMet) domain. The interval Gly1854 to Leu2167 is enoyl reductase (ER) domain. The tract at residues Ala2191–Ser2370 is ketoreductase (KR) domain. One can recognise a Carrier domain in the interval Glu2472–Ser2549. At Ser2509 the chain carries O-(pantetheine 4'-phosphoryl)serine.

It participates in secondary metabolite biosynthesis. Highly reducing polyketide synthase; part of the gene cluster that mediates the biosynthesis of the lipopeptides W493 A and B. W493 A and B consist of six amino acid residues D-allo-thr, L-Ala, D-Ala, L-Gln, D-Tyr, and L-Val/L-Ile linked to a 3-hydroxy-4-methyltetradecanoic acid polyketide chain. The biosynthesis starts with formation of the linear polyketide chain by the highly reducing polyketide synthase PKS40. The gene cluster contains a putative acyl-CoA ligase (FPSE_09184) for formation of a CoA thioester polyketide. The thiol bond could be hydrolyzed by the putative thioesterase (FPSE_09186) and then accepted by the first T domain in module 1 of NRPS32. The second T domain is responsible for accepting a threonine, which is adenylated by the A domain and epimerized to the D-allo-threonine formed by the E domain. The five successive modules incorporate Ala, Ala, Gln, Tyr, and Val/Ile into the final product, which is released by cyclization. In Fusarium pseudograminearum (strain CS3096) (Wheat and barley crown-rot fungus), this protein is Highly reducing polyketide synthase 40.